Here is a 276-residue protein sequence, read N- to C-terminus: Large ribosomal subunit protein uL2 (276 aa).

Disordered regions lie at residues 1-20 (MGIKKYNPTTNGRRNMTTND) and 219-276 (TVRG…RRKK). Residues 7-20 (NPTTNGRRNMTTND) show a composition bias toward polar residues.

The protein belongs to the universal ribosomal protein uL2 family. In terms of assembly, part of the 50S ribosomal subunit. Forms a bridge to the 30S subunit in the 70S ribosome.

In terms of biological role, one of the primary rRNA binding proteins. Required for association of the 30S and 50S subunits to form the 70S ribosome, for tRNA binding and peptide bond formation. It has been suggested to have peptidyltransferase activity; this is somewhat controversial. Makes several contacts with the 16S rRNA in the 70S ribosome. The chain is Large ribosomal subunit protein uL2 from Bacillus cereus (strain G9842).